The sequence spans 161 residues: ATP synthase subunit b 1 (161 aa).

A helical membrane pass occupies residues 5-25 (AETWVAVAFVLMVALFIYFGA).

The protein belongs to the ATPase B chain family. In terms of assembly, F-type ATPases have 2 components, F(1) - the catalytic core - and F(0) - the membrane proton channel. F(1) has five subunits: alpha(3), beta(3), gamma(1), delta(1), epsilon(1). F(0) has three main subunits: a(1), b(2) and c(10-14). The alpha and beta chains form an alternating ring which encloses part of the gamma chain. F(1) is attached to F(0) by a central stalk formed by the gamma and epsilon chains, while a peripheral stalk is formed by the delta and b chains.

Its subcellular location is the cell inner membrane. Its function is as follows. F(1)F(0) ATP synthase produces ATP from ADP in the presence of a proton or sodium gradient. F-type ATPases consist of two structural domains, F(1) containing the extramembraneous catalytic core and F(0) containing the membrane proton channel, linked together by a central stalk and a peripheral stalk. During catalysis, ATP synthesis in the catalytic domain of F(1) is coupled via a rotary mechanism of the central stalk subunits to proton translocation. Functionally, component of the F(0) channel, it forms part of the peripheral stalk, linking F(1) to F(0). The chain is ATP synthase subunit b 1 from Afipia carboxidovorans (strain ATCC 49405 / DSM 1227 / KCTC 32145 / OM5) (Oligotropha carboxidovorans).